Consider the following 145-residue polypeptide: Angiogenin (145 aa).

The first 24 residues, 1 to 24 (MAISPGPLFLIFVLGLVVIPPTLA), serve as a signal peptide directing secretion. Pyrrolidone carboxylic acid is present on Q25. The active-site Proton acceptor is the H37. Positions 45 and 46 each coordinate tRNA. Intrachain disulfides connect C50-C104, C63-C115, and C81-C130. Residues 55–59 (KRRSL) carry the Nucleolar localization signal motif. TRNA contacts are provided by C104 and V126. Catalysis depends on H137, which acts as the Proton donor.

Belongs to the pancreatic ribonuclease family. As to quaternary structure, homodimer. Interacts with RNH1; inhibiting ANG ribonuclease activity. Interacts with PCNA.

It is found in the secreted. It localises to the nucleus. Its subcellular location is the nucleolus. The protein resides in the cytoplasm. The protein localises to the stress granule. Its activity is regulated as follows. Has weak tRNA ribonuclease activity by itself due to partial autoinhibition by its C-terminus (residues 139-145), which folds into a short alpha-helix that partially occludes the substrate-binding site. In absence of stress, the ribonuclease activity is inhibited by RNH1 in the cytoplasm. In response to stress, dissociates from RNH1 in the cytoplasm and associates with cytoplasmic ribosomes with vacant A-sites: ribosomes directly activate the tRNA ribonuclease activity of ANG by refolding the C-terminal alpha-helix. In response to stress, the angiogenic activity of ANG is inhibited by RNH1 in the nucleus. Functionally, secreted ribonuclease that can either promote or restrict cell proliferation of target cells, depending on the context. Endocytosed in target cells via its receptor PLXNB2 and translocates to the cytoplasm or nucleus. Under stress conditions, localizes to the cytoplasm and promotes the assembly of stress granules (SGs): specifically cleaves a subset of tRNAs within anticodon loops to produce tRNA-derived stress-induced fragments (tiRNAs), resulting in translation repression and inhibition of cell proliferation. tiRNas also prevent formation of apoptosome, thereby promoting cell survival. Preferentially cleaves RNAs between a pyrimidine and an adenosine residue, suggesting that it cleaves the anticodon loop of tRNA(Ala) (32-UUAGCAU-38) after positions 33 and 36. Cleaves a subset of tRNAs, including tRNA(Ala), tRNA(Glu), tRNA(Gly), tRNA(Lys), tRNA(Val), tRNA(His), tRNA(Asp) and tRNA(Sec). Under growth conditions and in differentiated cells, translocates to the nucleus and stimulates ribosomal RNA (rRNA) transcription, including that containing the initiation site sequences of 45S rRNA, thereby promoting cell growth and proliferation. Angiogenin induces vascularization of normal and malignant tissues via its ability to promote rRNA transcription. Involved in hematopoietic stem and progenitor cell (HSPC) growth and survival by promoting rRNA transcription in growth conditions and inhibiting translation in response to stress, respectively. Mediates the crosstalk between myeloid and intestinal epithelial cells to protect the intestinal epithelial barrier integrity: secreted by myeloid cells and promotes intestinal epithelial cells proliferation and survival. Also mediates osteoclast-endothelial cell crosstalk in growing bone: produced by osteoclasts and protects the neighboring vascular cells against senescence by promoting rRNA transcription. This is Angiogenin from Mus musculus (Mouse).